We begin with the raw amino-acid sequence, 241 residues long: ATP synthase subunit a (241 aa).

A run of 8 helical transmembrane segments spans residues 29 to 49 (NSSL…LFGI), 54 to 74 (VIPG…ISII), 86 to 106 (IPLI…GVLP), 114 to 134 (HVIV…IVGF), 153 to 173 (WLAP…PVSL), 177 to 197 (LAAN…FIVN), 200 to 220 (IFFT…EVFV), and 221 to 241 (AILQ…DAVK).

The protein belongs to the ATPase A chain family. F-type ATPases have 2 components, CF(1) - the catalytic core - and CF(0) - the membrane proton channel. CF(1) has five subunits: alpha(3), beta(3), gamma(1), delta(1), epsilon(1). CF(0) has three main subunits: a(1), b(2) and c(9-12). The alpha and beta chains form an alternating ring which encloses part of the gamma chain. CF(1) is attached to CF(0) by a central stalk formed by the gamma and epsilon chains, while a peripheral stalk is formed by the delta and b chains.

The protein localises to the cell inner membrane. In terms of biological role, key component of the proton channel; it plays a direct role in the translocation of protons across the membrane. The chain is ATP synthase subunit a from Wolbachia sp. subsp. Drosophila simulans (strain wRi).